We begin with the raw amino-acid sequence, 395 residues long: L-lactate dehydrogenase (395 aa).

The FMN hydroxy acid dehydrogenase domain occupies 1–380 (MIISAASDYR…SKDSLVQELS (380 aa)). Tyr24 contributes to the substrate binding site. FMN is bound by residues Ser106 and Gln127. A substrate-binding site is contributed by Tyr129. Thr155 serves as a coordination point for FMN. Arg164 contributes to the substrate binding site. Residue Lys251 participates in FMN binding. The Proton acceptor role is filled by His275. Arg278 is a binding site for substrate. 306 to 330 (DSGIRNGLDVVRMIALGADSVLLGR) contributes to the FMN binding site.

Belongs to the FMN-dependent alpha-hydroxy acid dehydrogenase family. FMN is required as a cofactor.

The protein resides in the cell inner membrane. It catalyses the reaction (S)-lactate + A = pyruvate + AH2. In terms of biological role, catalyzes the conversion of L-lactate to pyruvate. Is coupled to the respiratory chain. This Enterobacter sp. (strain 638) protein is L-lactate dehydrogenase.